A 427-amino-acid chain; its full sequence is Glutamyl-tRNA reductase (427 aa).

Substrate contacts are provided by residues 49-52, Ser101, 106-108, and Gln112; these read TCNR and EPQ. Cys50 acts as the Nucleophile in catalysis. 181–186 provides a ligand contact to NADP(+); it reads GAGETI. The interval 407-427 is disordered; it reads FPATPGYRHPPVRPDDADPAP. A compositionally biased stretch (basic and acidic residues) spans 418-427; sequence VRPDDADPAP.

It belongs to the glutamyl-tRNA reductase family. As to quaternary structure, homodimer.

The enzyme catalyses (S)-4-amino-5-oxopentanoate + tRNA(Glu) + NADP(+) = L-glutamyl-tRNA(Glu) + NADPH + H(+). It functions in the pathway porphyrin-containing compound metabolism; protoporphyrin-IX biosynthesis; 5-aminolevulinate from L-glutamyl-tRNA(Glu): step 1/2. In terms of biological role, catalyzes the NADPH-dependent reduction of glutamyl-tRNA(Glu) to glutamate 1-semialdehyde (GSA). The sequence is that of Glutamyl-tRNA reductase from Stenotrophomonas maltophilia (strain K279a).